The primary structure comprises 157 residues: Protein BeeE (157 aa).

The protein belongs to the phage portal family.

This Escherichia coli (strain K12) protein is Protein BeeE (beeE).